Consider the following 521-residue polypeptide: Matrix metalloproteinase-A (521 aa).

The signal sequence occupies residues 1–21 (MFTGLHDILIILFLLVTLKIA). The propeptide at 22–95 (QNVDHTKFLQ…EDHQKSRGKR (74 aa)) is activation peptide. A Cysteine switch motif is present at residues 78–85 (PRCGHPDV). Residue Cys-80 coordinates Zn(2+). At 96-500 (YAPPQFKWKE…FCPRNEKLVL (405 aa)) the chain is on the extracellular side. Asn-199 carries an N-linked (GlcNAc...) asparagine glycan. Residue His-215 coordinates Zn(2+). The active site involves Glu-216. Positions 219 and 225 each coordinate Zn(2+). A disordered region spans residues 259–298 (KASKKENEEEERKTENEDKRRKTEKDRGRTREHESDDIRP). Positions 261–298 (SKKENEEEERKTENEDKRRKTEKDRGRTREHESDDIRP) are enriched in basic and acidic residues. Hemopexin repeat units follow at residues 300–347 (ECRV…FPGL), 391–443 (EKYV…WARV), and 444–492 (PKGV…FGFC). An N-linked (GlcNAc...) asparagine glycan is attached at Asn-469. Residues 501-521 (NSSSSHFSLIYATITILILIF) traverse the membrane as a helical segment.

The protein belongs to the peptidase M10A family. The cofactor is Zn(2+). Expressed in the anchor cell. Expressed in the anchor cell throughout the L3 and the early L4 stage, but not in vulva precursor cells P6.p, P6.px, or P6.pxx. Expression in P6.pxxx cells begins in late-L4 stage. During L4 lethargus, expressed in all four vulE cells, but not in vulF cells. The expression in vulE cells persists in adulthood. In males, expressed in the linker cell (LC) from the early L4 stage until LC death during the L4-to-adult molt.

It is found in the cell membrane. The protein resides in the basolateral cell membrane. In terms of biological role, metalloprotease which, together with cadherin cdh-3 and hemicentin him-4, plays a role in anchor cell (AC) invasion during postembryonic vulval development probably by promoting the degradation of the basement membrane separating the gonad from the vulva epithelium. The polypeptide is Matrix metalloproteinase-A (Caenorhabditis elegans).